Consider the following 404-residue polypeptide: Propionate kinase (404 aa).

Belongs to the acetokinase family. PduW subfamily.

It localises to the cytoplasm. It catalyses the reaction propanoate + ATP = propanoyl phosphate + ADP. It participates in polyol metabolism; 1,2-propanediol degradation. In terms of biological role, works with phosphate acetyltransferase (pta) to capture exogenous propionate and regenerate propionyl-CoA during degradation of 1,2-propanediol (1,2-PD). In Klebsiella pneumoniae (strain 342), this protein is Propionate kinase.